We begin with the raw amino-acid sequence, 321 residues long: RNA/RNP complex-1-interacting phosphatase (321 aa).

The segment covering 1 to 11 (MNQHYGRHGRG) has biased composition (basic residues). The disordered stretch occupies residues 1–27 (MNQHYGRHGRGRGRDFAACAPPKKKGR). Residues 60–207 (FEAKLMPEEC…LQKRHVRKNR (148 aa)) enclose the Tyrosine-protein phosphatase domain. The active-site Phosphocysteine intermediate is the Cys151. 152-157 (THGLNR) lines the substrate pocket. The active-site Proton donor/acceptor is the Arg157. Residues 205–262 (KNRNVSAPRTDGLEDSADPTEQVYTNNKPVKKKPRKNRRGGHLAPSQHFQHQTQSSPY) form a disordered region. Residues 233–245 (PVKKKPRKNRRGG) are compositionally biased toward basic residues. Positions 251–262 (QHFQHQTQSSPY) are enriched in polar residues.

The protein belongs to the protein-tyrosine phosphatase family. Non-receptor class dual specificity subfamily. As to quaternary structure, monomer. May interact with SFRS7 and SFRS9/SRP30C.

It is found in the nucleus. Its subcellular location is the nucleus speckle. In terms of biological role, possesses RNA 5'-triphosphatase and diphosphatase activities, but displays a poor protein-tyrosine phosphatase activity. In addition, has phosphatase activity with ATP, ADP and O-methylfluorescein phosphate (in vitro). Binds to RNA. May participate in nuclear mRNA metabolism. The protein is RNA/RNP complex-1-interacting phosphatase (Dusp11) of Mus musculus (Mouse).